The sequence spans 249 residues: 2,3,4,5-tetrahydropyridine-2,6-dicarboxylate N-acetyltransferase (249 aa).

The protein belongs to the transferase hexapeptide repeat family. DapH subfamily.

It catalyses the reaction (S)-2,3,4,5-tetrahydrodipicolinate + acetyl-CoA + H2O = L-2-acetamido-6-oxoheptanedioate + CoA. It participates in amino-acid biosynthesis; L-lysine biosynthesis via DAP pathway; LL-2,6-diaminopimelate from (S)-tetrahydrodipicolinate (acetylase route): step 1/3. In terms of biological role, catalyzes the transfer of an acetyl group from acetyl-CoA to tetrahydrodipicolinate. This is 2,3,4,5-tetrahydropyridine-2,6-dicarboxylate N-acetyltransferase from Fervidobacterium nodosum (strain ATCC 35602 / DSM 5306 / Rt17-B1).